Reading from the N-terminus, the 379-residue chain is Muconate cycloisomerase 1-1 (379 aa).

Residue K169 is part of the active site. D198, E224, and D247 together coordinate Mn(2+).

It belongs to the mandelate racemase/muconate lactonizing enzyme family. In terms of assembly, homooctamer. The cofactor is Mn(2+).

The enzyme catalyses (S)-muconolactone = cis,cis-muconate + H(+). The protein operates within aromatic compound metabolism; beta-ketoadipate pathway; 5-oxo-4,5-dihydro-2-furylacetate from catechol: step 2/3. In terms of biological role, catalyzes a syn cycloisomerization. This is Muconate cycloisomerase 1-1 (catB1) from Acinetobacter lwoffii.